Consider the following 517-residue polypeptide: Splicing factor cactin (517 aa).

The span at 1 to 14 shows a compositional bias: basic and acidic residues; that stretch reads MAFRDSTRDFNRSR. Positions 1 to 59 are disordered; it reads MAFRDSTRDFNRSRPEKRHASRSSSPRSFRPSNQNARANYNLPRVRDAMKEEERSRETK. Residues 22-32 are compositionally biased toward low complexity; that stretch reads RSSSPRSFRPS. Positions 44 to 59 are enriched in basic and acidic residues; it reads RVRDAMKEEERSRETK.

It belongs to the CACTIN family. Interacts with sde2. Interacts with cdc5.

Functionally, plays a role in pre-mRNA splicing by facilitating excision of introns featuring long spacing between the branchpoint and 3'-splice site (ss). Recruited to the spliceosome by sde2, which may enable folding of the RNA between the BP and 3'-ss to guide the splice site towards the spliceosome's catalytic center. Assists the splicing of several components involved in chromatin organization. This chain is Splicing factor cactin, found in Schizosaccharomyces pombe (strain 972 / ATCC 24843) (Fission yeast).